The chain runs to 87 residues: Small ribosomal subunit protein bS20 (87 aa).

It belongs to the bacterial ribosomal protein bS20 family.

Binds directly to 16S ribosomal RNA. The polypeptide is Small ribosomal subunit protein bS20 (Shigella flexneri serotype 5b (strain 8401)).